A 209-amino-acid chain; its full sequence is Imidazole glycerol phosphate synthase subunit HisH (209 aa).

One can recognise a Glutamine amidotransferase type-1 domain in the interval 1-205 (MIAIIDYGMG…KGVVETWKSS (205 aa)). The active-site Nucleophile is the Cys-79. Catalysis depends on residues His-180 and Glu-182.

Heterodimer of HisH and HisF.

The protein localises to the cytoplasm. It carries out the reaction 5-[(5-phospho-1-deoxy-D-ribulos-1-ylimino)methylamino]-1-(5-phospho-beta-D-ribosyl)imidazole-4-carboxamide + L-glutamine = D-erythro-1-(imidazol-4-yl)glycerol 3-phosphate + 5-amino-1-(5-phospho-beta-D-ribosyl)imidazole-4-carboxamide + L-glutamate + H(+). The enzyme catalyses L-glutamine + H2O = L-glutamate + NH4(+). Its pathway is amino-acid biosynthesis; L-histidine biosynthesis; L-histidine from 5-phospho-alpha-D-ribose 1-diphosphate: step 5/9. Functionally, IGPS catalyzes the conversion of PRFAR and glutamine to IGP, AICAR and glutamate. The HisH subunit catalyzes the hydrolysis of glutamine to glutamate and ammonia as part of the synthesis of IGP and AICAR. The resulting ammonia molecule is channeled to the active site of HisF. In Bacillus thuringiensis (strain Al Hakam), this protein is Imidazole glycerol phosphate synthase subunit HisH.